A 494-amino-acid chain; its full sequence is UDP-N-acetylmuramate--L-alanine ligase (494 aa).

140 to 146 (GTHGKTT) provides a ligand contact to ATP.

Belongs to the MurCDEF family.

The protein localises to the cytoplasm. It catalyses the reaction UDP-N-acetyl-alpha-D-muramate + L-alanine + ATP = UDP-N-acetyl-alpha-D-muramoyl-L-alanine + ADP + phosphate + H(+). It functions in the pathway cell wall biogenesis; peptidoglycan biosynthesis. Its function is as follows. Cell wall formation. The chain is UDP-N-acetylmuramate--L-alanine ligase from Nostoc sp. (strain PCC 7120 / SAG 25.82 / UTEX 2576).